The primary structure comprises 85 residues: UPF0297 protein Cbei_1105 (85 aa).

It belongs to the UPF0297 family.

The polypeptide is UPF0297 protein Cbei_1105 (Clostridium beijerinckii (strain ATCC 51743 / NCIMB 8052) (Clostridium acetobutylicum)).